A 130-amino-acid chain; its full sequence is Serum amyloid A-4 protein (130 aa).

The N-terminal stretch at 1–18 (MRLFTGIVFCSLVMGVTS) is a signal peptide. N-linked (GlcNAc...) asparagine; partial glycosylation occurs at Asn94. The interval 101–130 (DSKSNEKAEEWGRSGKDPDRFRPDGLPKKY) is disordered.

It belongs to the SAA family. In terms of assembly, apolipoprotein of the HDL complex. As to expression, expressed by the liver; secreted in plasma.

It is found in the secreted. Functionally, major acute phase reactant. This is Serum amyloid A-4 protein from Homo sapiens (Human).